The primary structure comprises 204 residues: Holliday junction branch migration complex subunit RuvA (204 aa).

The tract at residues 1–63 (MIASLRGTVI…EDAMKLYGFI (63 aa)) is domain I. The domain II stretch occupies residues 64–142 (DDQSREMFAL…AYTVGVVDDG (79 aa)). Residues 143 to 151 (APTAPTQGV) are flexible linker. The domain III stretch occupies residues 152–204 (APVVVVDQVTQALTGLGFTEKQADDAVAAVLSADPGLDTSAALRAALAKLGGK).

This sequence belongs to the RuvA family. As to quaternary structure, homotetramer. Forms an RuvA(8)-RuvB(12)-Holliday junction (HJ) complex. HJ DNA is sandwiched between 2 RuvA tetramers; dsDNA enters through RuvA and exits via RuvB. An RuvB hexamer assembles on each DNA strand where it exits the tetramer. Each RuvB hexamer is contacted by two RuvA subunits (via domain III) on 2 adjacent RuvB subunits; this complex drives branch migration. In the full resolvosome a probable DNA-RuvA(4)-RuvB(12)-RuvC(2) complex forms which resolves the HJ.

It localises to the cytoplasm. The RuvA-RuvB-RuvC complex processes Holliday junction (HJ) DNA during genetic recombination and DNA repair, while the RuvA-RuvB complex plays an important role in the rescue of blocked DNA replication forks via replication fork reversal (RFR). RuvA specifically binds to HJ cruciform DNA, conferring on it an open structure. The RuvB hexamer acts as an ATP-dependent pump, pulling dsDNA into and through the RuvAB complex. HJ branch migration allows RuvC to scan DNA until it finds its consensus sequence, where it cleaves and resolves the cruciform DNA. In Corynebacterium efficiens (strain DSM 44549 / YS-314 / AJ 12310 / JCM 11189 / NBRC 100395), this protein is Holliday junction branch migration complex subunit RuvA.